The sequence spans 218 residues: Probable 3-keto-L-gulonate-6-phosphate decarboxylase (218 aa).

Position 11 (Asp11) interacts with substrate. Mg(2+) is bound by residues Glu33 and Asp62. Position 194 (Arg194) interacts with substrate.

The protein belongs to the HPS/KGPDC family. KGPDC subfamily. The cofactor is Mg(2+).

The enzyme catalyses 3-dehydro-L-gulonate 6-phosphate + H(+) = L-xylulose 5-phosphate + CO2. It participates in cofactor degradation; L-ascorbate degradation; D-xylulose 5-phosphate from L-ascorbate: step 2/4. In terms of biological role, catalyzes the decarboxylation of 3-keto-L-gulonate-6-P into L-xylulose-5-P. Is involved in the anaerobic L-ascorbate utilization. The sequence is that of Probable 3-keto-L-gulonate-6-phosphate decarboxylase (ulaD) from Mycoplasma pneumoniae (strain ATCC 29342 / M129 / Subtype 1) (Mycoplasmoides pneumoniae).